Here is a 341-residue protein sequence, read N- to C-terminus: Tetraacyldisaccharide 4'-kinase (341 aa).

Thr57–Thr64 contacts ATP.

Belongs to the LpxK family.

It carries out the reaction a lipid A disaccharide + ATP = a lipid IVA + ADP + H(+). Its pathway is glycolipid biosynthesis; lipid IV(A) biosynthesis; lipid IV(A) from (3R)-3-hydroxytetradecanoyl-[acyl-carrier-protein] and UDP-N-acetyl-alpha-D-glucosamine: step 6/6. Functionally, transfers the gamma-phosphate of ATP to the 4'-position of a tetraacyldisaccharide 1-phosphate intermediate (termed DS-1-P) to form tetraacyldisaccharide 1,4'-bis-phosphate (lipid IVA). This chain is Tetraacyldisaccharide 4'-kinase, found in Maricaulis maris (strain MCS10) (Caulobacter maris).